A 506-amino-acid polypeptide reads, in one-letter code: Sucrose transport protein SUT3 (506 aa).

Topologically, residues 1 to 20 (MAVDMELDGGGDGKGKAPPQ) are cytoplasmic. A helical membrane pass occupies residues 21 to 41 (ISLSGLFLACMVAGGVQYGWA). Topologically, residues 42 to 54 (LQLSLLTPYIQTL) are extracellular. The helical transmembrane segment at 55–75 (GIPHALTSVMWLCGPIAGLIV) threads the bilayer. Topologically, residues 76-94 (QPCVGLYSDKCTSSLGRRR) are cytoplasmic. Residues 95–115 (PFILTGCIIICISVIVIGFSS) form a helical membrane-spanning segment. Topologically, residues 116-135 (DIGYALGDATEDCKVYRGPR) are extracellular. A helical membrane pass occupies residues 136–156 (YHAAAAFILGFWLLDFSNNTV). Residues 157–171 (QGPARALMADLSGRH) lie on the Cytoplasmic side of the membrane. The chain crosses the membrane as a helical span at residues 172-192 (GPSAANAIFCSWMALGNILGY). The Extracellular segment spans residues 193-220 (SSGSTNDWHKWFPFLMTRACCEACANLK). The chain crosses the membrane as a helical span at residues 221-241 (AAFLVAVVFLGLSTAVTMVFA). At 242–275 (REVALDPVAAAKRNEGEASGPLAVFKGMKNLPVG) the chain is on the cytoplasmic side. The helical transmembrane segment at 276-296 (MPSVLIVTGLTWLSWFPFILF) threads the bilayer. Topologically, residues 297 to 327 (DTDWMGREIYHGRPDGSPAEVTAFQEGVRQG) are extracellular. The helical transmembrane segment at 328-348 (AFGLLLNSIVLGISSFLIEPM) threads the bilayer. The Cytoplasmic portion of the chain corresponds to 349-355 (CRRLGAR). A helical transmembrane segment spans residues 356-376 (AVWVMSSAVVCVAMAAVSVLS). Topologically, residues 377-404 (AWSLGDFGGSVQDAARAPAEEGGVRASA) are extracellular. The helical transmembrane segment at 405 to 425 (LALFVFLGLPFAVLCSVPFAV) threads the bilayer. Topologically, residues 426 to 441 (TAQLTASRGGGQGLCT) are cytoplasmic. The chain crosses the membrane as a helical span at residues 442 to 462 (GVLNISIVVPQMAIALGAGPW). The Extracellular portion of the chain corresponds to 463 to 470 (DELFGEGN). The chain crosses the membrane as a helical span at residues 471–491 (IPAFAMASVFAAAAAAAGVVL). The Cytoplasmic portion of the chain corresponds to 492–506 (LPKVSVRSVSMAGGH).

The protein belongs to the glycoside-pentoside-hexuronide (GPH) cation symporter transporter (TC 2.A.2.4) family. Homodimer.

The protein localises to the cell membrane. The protein operates within glycan biosynthesis; sucrose metabolism. Responsible for the transport of sucrose into the cell, with the concomitant uptake of protons (symport system). May also transport other glucosides. In Oryza sativa subsp. indica (Rice), this protein is Sucrose transport protein SUT3 (SUT3).